Reading from the N-terminus, the 50-residue chain is Large ribosomal subunit protein bL33A (50 aa).

Belongs to the bacterial ribosomal protein bL33 family.

In Mycoplasmopsis pulmonis (strain UAB CTIP) (Mycoplasma pulmonis), this protein is Large ribosomal subunit protein bL33A (rpmG1).